Here is a 288-residue protein sequence, read N- to C-terminus: Mycothiol S-conjugate amidase (288 aa).

Zn(2+) contacts are provided by His-12, Asp-15, and His-142.

The protein belongs to the MshB deacetylase family. Mca subfamily. In terms of assembly, monomer. Zn(2+) serves as cofactor.

The enzyme catalyses mycothiol S-conjugate + H2O = an N-acetyl-L-cysteine-S-conjugate + 1D-myo-inositol 2-amino-2-deoxy-alpha-D-glucopyranoside. Its activity is regulated as follows. Partially inhibited by MSH when MSmB (a bimane derivative of MSH) is used as substrate. Functionally, a mycothiol (MSH, N-acetyl-cysteinyl-glucosaminyl-inositol) S-conjugate amidase, it recycles conjugated MSH to the N-acetyl cysteine conjugate and the MSH precursor. Involved in MSH-dependent detoxification of a number of alkylating agents and antibiotics. Activity is specific for the mycothiol moiety. In Mycolicibacterium smegmatis (strain ATCC 700084 / mc(2)155) (Mycobacterium smegmatis), this protein is Mycothiol S-conjugate amidase.